The following is a 133-amino-acid chain: Cytidine deaminase (133 aa).

Residues 4 to 126 form the CMP/dCMP-type deaminase domain; the sequence is VDWNMLRGNA…DLLPDAFGLD (123 aa). 45-47 serves as a coordination point for substrate; it reads NVE. C56 contacts Zn(2+). The active-site Proton donor is the E58. Residues C89 and C92 each contribute to the Zn(2+) site.

The protein belongs to the cytidine and deoxycytidylate deaminase family. In terms of assembly, homotetramer. Requires Zn(2+) as cofactor.

It carries out the reaction cytidine + H2O + H(+) = uridine + NH4(+). The enzyme catalyses 2'-deoxycytidine + H2O + H(+) = 2'-deoxyuridine + NH4(+). Recycles cytidine and 2-deoxycytidine for uridine and 2-deoxyuridine synthesis, respectively. Catalyzes the hydrolytic deamination of cytidine and 2-deoxycytidine to form, respectively, uridine and 2-deoxyuridine. The sequence is that of Cytidine deaminase (cdd) from Mycobacterium tuberculosis (strain CDC 1551 / Oshkosh).